The primary structure comprises 134 residues: Ribonuclease P protein component (134 aa).

The protein belongs to the RnpA family. As to quaternary structure, consists of a catalytic RNA component (M1 or rnpB) and a protein subunit.

The enzyme catalyses Endonucleolytic cleavage of RNA, removing 5'-extranucleotides from tRNA precursor.. Functionally, RNaseP catalyzes the removal of the 5'-leader sequence from pre-tRNA to produce the mature 5'-terminus. It can also cleave other RNA substrates such as 4.5S RNA. The protein component plays an auxiliary but essential role in vivo by binding to the 5'-leader sequence and broadening the substrate specificity of the ribozyme. The chain is Ribonuclease P protein component from Pseudomonas putida (strain ATCC 700007 / DSM 6899 / JCM 31910 / BCRC 17059 / LMG 24140 / F1).